Consider the following 349-residue polypeptide: Ferredoxin--NADP reductase 1 (349 aa).

FAD is bound by residues glutamate 36, lysine 44, tyrosine 48, valine 88, leucine 123, aspartate 290, and serine 331.

Belongs to the ferredoxin--NADP reductase type 2 family. As to quaternary structure, homodimer. The cofactor is FAD.

The enzyme catalyses 2 reduced [2Fe-2S]-[ferredoxin] + NADP(+) + H(+) = 2 oxidized [2Fe-2S]-[ferredoxin] + NADPH. In Bacillus cereus (strain ATCC 10987 / NRS 248), this protein is Ferredoxin--NADP reductase 1.